The primary structure comprises 522 residues: Sensory neuron membrane protein 1 (522 aa).

Over 1 to 11 (MKLPKHLKFAA) the chain is Cytoplasmic. A helical transmembrane segment spans residues 12–32 (GAGGAFLFGILFGWVMFPAIL). The Extracellular segment spans residues 33–455 (KGQLKKEMAL…KFQLFYPKKA (423 aa)). Asn-67 and Asn-229 each carry an N-linked (GlcNAc...) asparagine glycan. Disulfide bonds link Cys-268-Cys-333, Cys-297-Cys-350, and Cys-335-Cys-339. N-linked (GlcNAc...) asparagine glycosylation is present at Asn-438. A helical membrane pass occupies residues 456–476 (VGVIKWLLVTFGGFGLIGCTI). Topologically, residues 477–522 (YHYKDRIMSFASSPGSAAVTKVKPEEVEQKDVSVIGQPQEPAKINM) are cytoplasmic.

The protein belongs to the CD36 family.

It is found in the cell membrane. Its function is as follows. Plays an olfactory role that is not restricted to pheromone sensitivity. The sequence is that of Sensory neuron membrane protein 1 from Plutella xylostella (Diamondback moth).